A 154-amino-acid polypeptide reads, in one-letter code: Nucleoside diphosphate kinase (154 aa).

Residues K12, F60, R88, T94, R105, and N115 each contribute to the ATP site. The active-site Pros-phosphohistidine intermediate is the H118.

The protein belongs to the NDK family. Mg(2+) is required as a cofactor.

It is found in the cytoplasm. It carries out the reaction a 2'-deoxyribonucleoside 5'-diphosphate + ATP = a 2'-deoxyribonucleoside 5'-triphosphate + ADP. It catalyses the reaction a ribonucleoside 5'-diphosphate + ATP = a ribonucleoside 5'-triphosphate + ADP. Functionally, major role in the synthesis of nucleoside triphosphates other than ATP. The ATP gamma phosphate is transferred to the NDP beta phosphate via a ping-pong mechanism, using a phosphorylated active-site intermediate. This chain is Nucleoside diphosphate kinase, found in Haloarcula marismortui (strain ATCC 43049 / DSM 3752 / JCM 8966 / VKM B-1809) (Halobacterium marismortui).